A 1025-amino-acid chain; its full sequence is DNA ligase 4 (1025 aa).

Residues M1–V36 form a disordered region. ATP contacts are provided by E289, K291, L292, R296, E349, F387, E447, K452, K469, and K471. The active-site N6-AMP-lysine intermediate is the K291. E349 contacts Mg(2+). Position 447 (E447) interacts with Mg(2+). The region spanning V667–F763 is the BRCT 1 domain. The segment at A773–K904 is disordered. Composition is skewed to acidic residues over residues E775–G785 and S806–A816. The span at P817–S838 shows a compositional bias: basic and acidic residues. Acidic residues predominate over residues D845 to D870. Over residues R891–K904 the composition is skewed to basic and acidic residues. The 111-residue stretch at D915–P1025 folds into the BRCT 2 domain.

It belongs to the ATP-dependent DNA ligase family. Requires Mg(2+) as cofactor.

It is found in the nucleus. The enzyme catalyses ATP + (deoxyribonucleotide)n-3'-hydroxyl + 5'-phospho-(deoxyribonucleotide)m = (deoxyribonucleotide)n+m + AMP + diphosphate.. Its function is as follows. DNA ligase involved in DNA non-homologous end joining (NHEJ); required for double-strand break (DSB) repair. In Coprinopsis cinerea (Inky cap fungus), this protein is DNA ligase 4 (LIG4).